Consider the following 280-residue polypeptide: Borealin (280 aa).

A required for interaction with INCENP region spans residues 1–58; that stretch reads MAPRKGSSRVAKTNSLRRRKLASFLKDFDREVEIRIKQIESDRQNLLKEVDNLYNIEI. A required for centromere localization region spans residues 1–88; that stretch reads MAPRKGSSRV…NKQALEEAAT (88 aa). A required for interaction with SENP3 region spans residues 1 to 140; it reads MAPRKGSSRV…ENERKNLQTA (140 aa). The tract at residues 10 to 109 is required to form a minimal CPC core complex that localizes to the central spindle and midbody and properly executes the role of the CPC during cytokinesis; that stretch reads VAKTNSLRRR…TAEAIQTPLK (100 aa). The segment at 20-78 is required for interaction with INCENP and BIRC5; that stretch reads KLASFLKDFDREVEIRIKQIESDRQNLLKEVDNLYNIEILRLPKALREMNWLDYFALGG. Residues T88 and T94 each carry the phosphothreonine; by TTK modification. The residue at position 106 (T106) is a Phosphothreonine. S110 carries the post-translational modification Phosphoserine. The disordered stretch occupies residues 130 to 169; that stretch reads EENERKNLQTARVKRCPPSKKRTQSIQGKGKGKRSSRANT. Residue K135 forms a Glycyl lysine isopeptide (Lys-Gly) (interchain with G-Cter in SUMO2) linkage. The segment covering 141–152 has biased composition (basic residues); the sequence is RVKRCPPSKKRT. At S165 the chain carries Phosphoserine; by AURKB. T169 bears the Phosphothreonine; by TTK mark. T189 and T204 each carry phosphothreonine. Phosphoserine occurs at positions 219 and 224. Position 230 is a phosphothreonine; by TTK (T230). S238 and S244 each carry phosphoserine.

It belongs to the borealin family. As to quaternary structure, may form homooligomers and homodimers. Component of the chromosomal passenger complex (CPC) composed of at least BIRC5/survivin, CDCA8/borealin, INCENP, AURKB or AURKC; in the complex forms a triple-helix bundle-based subcomplex with INCENP and BIRC5. Interacts with SENP3, UBE2I and RANBP2. Interacts (phosphorylated) with SGO1 and SGO2; the association is dependent on CDK1. Post-translationally, phosphorylated by TTK, essentially at Thr-88, Thr94, Thr-169 and Thr-230. Phosphorylation (probably by CDK1) promotes targeting of the CPC to centromeric DNA. Sumoylated by UBE2I and RANBP2. Desumoylated by SENP3 through the removal of SUMO2 and SUMO3.

It is found in the nucleus. The protein localises to the nucleolus. It localises to the cytoplasm. Its subcellular location is the chromosome. The protein resides in the centromere. It is found in the cytoskeleton. The protein localises to the spindle. Functionally, component of the chromosomal passenger complex (CPC), a complex that acts as a key regulator of mitosis. The CPC complex has essential functions at the centromere in ensuring correct chromosome alignment and segregation and is required for chromatin-induced microtubule stabilization and spindle assembly. In the complex, it may be required to direct the CPC to centromeric DNA. This Pongo abelii (Sumatran orangutan) protein is Borealin (CDCA8).